Here is a 458-residue protein sequence, read N- to C-terminus: Divalent metal cation transporter MntH (458 aa).

11 helical membrane-spanning segments follow: residues 38-58 (GFWKTLMAFMGPGALVAVGYM), 86-106 (LIAMLLQAMAARLGIVTGMDL), 119-139 (GIFLWIVTELAIMATDIAEII), 151-171 (IPLLWGVLITAFDVLLLLLLM), 180-200 (AIVATLVAVILFVFLYEVILA), 223-243 (MLFLALGIVGATVMPHNLYLH), 275-295 (LTIAFVVNCLLLILGAAMFYG), 315-335 (IVGSIASPMLSLLFAVALLAS), 370-390 (GLSILPVIIFTVYYHGNEAQV), 395-415 (IYSQVFLSIALPVSMIPLTLF), and 436-456 (WFVTIVLTLLNIYLILQTVGL).

It belongs to the NRAMP family.

It is found in the cell membrane. In terms of biological role, h(+)-stimulated, divalent metal cation uptake system. In Latilactobacillus sakei subsp. sakei (strain 23K) (Lactobacillus sakei subsp. sakei), this protein is Divalent metal cation transporter MntH.